Consider the following 441-residue polypeptide: UDP-N-acetylglucosamine--peptide N-acetylglucosaminyltransferase stabilizing protein GtfB (441 aa).

Belongs to the GtfB family. Forms a heterotetramer with 2 subunits each of GtfA and GtfB. Part of the accessory SecA2/SecY2 protein translocation apparatus.

It is found in the cell membrane. The protein operates within protein modification; protein glycosylation. Functionally, required for polymorphic O-glycosylation of the serine-rich repeat protein (SRRP) in this bacteria. A stabilizing protein that is part of the accessory SecA2/SecY2 system specifically required to export serine-rich repeat cell wall proteins encoded in the same operon. The GtfA-GtfB complex adds GlcNAc from UDP-GlcNAc to the substrate protein, attaching the first sugar residue. Stabilizes the glycosylation activity of GtfA. Has no N-acetylglucosaminyl transferase activity on its own. This chain is UDP-N-acetylglucosamine--peptide N-acetylglucosaminyltransferase stabilizing protein GtfB, found in Limosilactobacillus reuteri subsp. suis (strain ATCC 53608 / LMG 31752 / 1063) (Lactobacillus reuteri).